The primary structure comprises 468 residues: Citrate synthase, mitochondrial (468 aa).

The N-terminal 30 residues, 1–30 (MSLITAGRLCARILGAKNSPCALIAARQAS), are a transit peptide targeting the mitochondrion. Active-site residues include histidine 303 and histidine 349. Arginine 358 lines the oxaloacetate pocket. Aspartate 404 is a catalytic residue. Positions 430 and 450 each coordinate oxaloacetate.

It belongs to the citrate synthase family. Homodimer.

It localises to the mitochondrion matrix. The enzyme catalyses oxaloacetate + acetyl-CoA + H2O = citrate + CoA + H(+). The protein operates within carbohydrate metabolism; tricarboxylic acid cycle; isocitrate from oxaloacetate: step 1/2. Key enzyme of the Krebs tricarboxylic acid cycle which catalyzes the synthesis of citrate from acetyl coenzyme A and oxaloacetate. The polypeptide is Citrate synthase, mitochondrial (cs) (Xenopus tropicalis (Western clawed frog)).